A 67-amino-acid chain; its full sequence is Transcription elongation factor Spt4 (67 aa).

The Zn(2+) site is built by cysteine 7, cysteine 10, cysteine 19, and cysteine 22.

It belongs to the archaeal Spt4 family. Heterodimer composed of Spt4 and Spt5. Interacts with RNA polymerase (RNAP). The complex interacts with FttA.

The protein resides in the chromosome. The Stp4-Spt5 complex stimulates transcription elongation on both naked DNA and histone-bound DNA (chromatin), facilitating transcription through the histone barrier. Neither protein functions alone. The complex also stimulates the transcription termination activity of FttA, neither protein alone stimulates FttA-dependent termination. This chain is Transcription elongation factor Spt4, found in Thermococcus kodakarensis (strain ATCC BAA-918 / JCM 12380 / KOD1) (Pyrococcus kodakaraensis (strain KOD1)).